The sequence spans 178 residues: Large ribosomal subunit protein uL6 (178 aa).

The protein belongs to the universal ribosomal protein uL6 family. Part of the 50S ribosomal subunit.

This protein binds to the 23S rRNA, and is important in its secondary structure. It is located near the subunit interface in the base of the L7/L12 stalk, and near the tRNA binding site of the peptidyltransferase center. The protein is Large ribosomal subunit protein uL6 of Maridesulfovibrio salexigens (strain ATCC 14822 / DSM 2638 / NCIMB 8403 / VKM B-1763) (Desulfovibrio salexigens).